Consider the following 352-residue polypeptide: Maleylacetate reductase (352 aa).

The protein belongs to the iron-containing alcohol dehydrogenase family.

The catalysed reaction is 3-oxoadipate + NAD(+) = maleylacetate + NADH + H(+). It catalyses the reaction 3-oxoadipate + NADP(+) = maleylacetate + NADPH + H(+). The protein operates within aromatic compound metabolism; 3-chlorocatechol degradation. The protein is Maleylacetate reductase (clcE) of Pseudomonas knackmussii (strain DSM 6978 / CCUG 54928 / LMG 23759 / B13).